The sequence spans 471 residues: Trigger factor (471 aa).

Residues 174–261 form the PPIase FKBP-type domain; it reads GDVAVVSFEG…VKDLKTRELP (88 aa). Over residues 436-446 the composition is skewed to polar residues; the sequence is ETLPKTKSLNG. The tract at residues 436 to 471 is disordered; sequence ETLPKTKSLNGKPSTQGKTSQSKSKKTKTKVEKTTK. A compositionally biased stretch (low complexity) spans 447 to 457; sequence KPSTQGKTSQS.

It belongs to the FKBP-type PPIase family. Tig subfamily.

Its subcellular location is the cytoplasm. The catalysed reaction is [protein]-peptidylproline (omega=180) = [protein]-peptidylproline (omega=0). Functionally, involved in protein export. Acts as a chaperone by maintaining the newly synthesized protein in an open conformation. Functions as a peptidyl-prolyl cis-trans isomerase. The sequence is that of Trigger factor from Prochlorococcus marinus (strain MIT 9211).